The chain runs to 721 residues: Polyribonucleotide nucleotidyltransferase (721 aa).

Asp-495 and Asp-501 together coordinate Mg(2+). A KH domain is found at 562–621; sequence PRITTIKIRPERIKDIIGPGGKTIKDITARTGTSINIEDDGSVSIASPNQDKVEEAIKMI. The S1 motif domain occupies 631–699; sequence GRIYMGTVRK…RSGKIRLSRK (69 aa). The disordered stretch occupies residues 699–721; it reads KEALADSAKKSEGTEPPKGEPAK.

The protein belongs to the polyribonucleotide nucleotidyltransferase family. It depends on Mg(2+) as a cofactor.

It localises to the cytoplasm. It catalyses the reaction RNA(n+1) + phosphate = RNA(n) + a ribonucleoside 5'-diphosphate. Functionally, involved in mRNA degradation. Catalyzes the phosphorolysis of single-stranded polyribonucleotides processively in the 3'- to 5'-direction. This chain is Polyribonucleotide nucleotidyltransferase, found in Anaeromyxobacter dehalogenans (strain 2CP-C).